The primary structure comprises 381 residues: Subtilisin E (381 aa).

The N-terminal stretch at 1-29 (MRSKKLWISLLFALTLIFTMAFSNMSAQA) is a signal peptide. The propeptide occupies 30 to 106 (AGKSSTEKKY…VEEDHIAHEY (77 aa)). Positions 38–103 (KYIVGFKQTM…VAYVEEDHIA (66 aa)) constitute an Inhibitor I9 domain. Gln-108 contacts Ca(2+). The Peptidase S8 domain occupies 111 to 380 (PYGISQIKAP…KGLINVQAAA (270 aa)). The Charge relay system role is filled by Asp-138. Asp-147 serves as a coordination point for Ca(2+). His-170 (charge relay system) is an active-site residue. Ca(2+) contacts are provided by Leu-181, Asn-183, Ile-185, Val-187, Ala-275, Tyr-277, Thr-280, and Asp-303. Ser-327 (charge relay system) is an active-site residue.

It belongs to the peptidase S8 family. It depends on Ca(2+) as a cofactor.

The protein resides in the secreted. It catalyses the reaction Hydrolysis of proteins with broad specificity for peptide bonds, and a preference for a large uncharged residue in P1. Hydrolyzes peptide amides.. Inhibited by PMSF (phenylmethylsulphonyl fluoride) and 3,4-dichloroisocoumarin but not by EDTA (shown for strain RT-5). Its function is as follows. An extracellular alkaline serine protease, it catalyzes the hydrolysis of proteins and peptide amides. In Bacillus subtilis (strain 168), this protein is Subtilisin E.